The following is a 349-amino-acid chain: UPF0324 inner membrane protein YeiH (349 aa).

At 1–12 (MTNITLQKQHRT) the chain is on the periplasmic side. A helical transmembrane segment spans residues 13-32 (LWHFIPGLALSAVITGVALW). Topologically, residues 33–35 (GGS) are cytoplasmic. The chain crosses the membrane as a helical span at residues 36–58 (IPAVAGAGFSALTLAILLGMVLG). Over 59–99 (NTIYPHIWKSCDGGVLFAKQYLLRLGIILYGFRLTFSQIAD) the chain is Periplasmic. The chain crosses the membrane as a helical span at residues 100–122 (VGISGIIIDVLTLSSTFLLACFL). The Cytoplasmic segment spans residues 123–131 (GQKVFGLDK). Residues 132–151 (HTSWLIGAGSSICGAAAVLA) form a helical membrane-spanning segment. Over 152–162 (TEPVVKAEASK) the chain is Periplasmic. A helical membrane pass occupies residues 163-185 (VTVAVATVVIFGTVAIFLYPAIY). Topologically, residues 186–261 (PLMSQWFSPE…SGANSGEKSK (76 aa)) are cytoplasmic. The helical transmembrane segment at 262–283 (ITIPWFAILFIVVAIFNSFHLL) threads the bilayer. Residues 284 to 289 (PQSVVN) are Periplasmic-facing. A helical transmembrane segment spans residues 290-312 (MLVTLDTFLLAMAMAALGLTTHV). At 313 to 321 (SALKKAGAK) the chain is on the cytoplasmic side. Residues 322 to 344 (PLLMALVLFAWLIVGGGAINYVI) form a helical membrane-spanning segment. Over 345 to 349 (QSVIA) the chain is Periplasmic.

It belongs to the UPF0324 family.

Its subcellular location is the cell inner membrane. The polypeptide is UPF0324 inner membrane protein YeiH (yeiH) (Escherichia coli O157:H7).